The chain runs to 310 residues: Thioesterase pytI (310 aa).

The next 2 membrane-spanning stretches (helical) occupy residues Ser14–Leu34 and Leu95–Ala115. Positions Thr168–Glu195 are disordered. Low complexity predominate over residues Ser170–Ala184.

The protein belongs to the AMT4 thioesterase family.

It localises to the membrane. It functions in the pathway secondary metabolite biosynthesis. Its function is as follows. Thioesterase; part of the gene cluster that mediates the biosynthesis of pyranterreones, a family of antioxidative compounds. The first step of pyranonigrins biosynthesis is performed by the hybrid PKS-NRPS synthetase pytA that condenses 4 malonyl-CoA units ato the acetyl starter unit by the modular PKS of pytA. The acyl chain is then connected to an L-serine through the amide bond by the modular NRPS of pytA. A tetramic acid is formed and released from the PKS-NRPS pytA to give pyranterreone 5 with the help of the thioesterase pytI. Pyranterreone 5 could be methylated by pytC to afford pyranterreone 6. Both pyranterreones 5 and 6 are subsequently oxidized by the FAD-linked oxidoreductase pytB and the cytochrome P450 monooxygenase pytD to form the fused gamma-pyrone core, resulting in pyranterreones 7 and 11, respectively. The hydroxy group at C-8 of pyranterreones 7 and 11 are dehydrated by the aspartyl protease pytH to form a delta-7 double bond to give pyranterreones 3 and 1, 2 accordingly. The exo-methylene of pyranterreone 3 could be reduced into a pendant methyl by reductase pytE to provide pyranterreone 4, also known as cordylactam. Pyranterreone 4 can be reconverted to pyranterreone 3 through pytB-catalyzed dehydrogenation or further oxidized to pyranterreones 9 and 10. This is Thioesterase pytI from Aspergillus terreus.